We begin with the raw amino-acid sequence, 238 residues long: MNKAILAVAMVLLLAGCATKPEEIGRAPDLSPVAAHLGMQNNPQFNGYPARPGKASYSLWDQRSTNFFKDPRAATPGDVLTVIISINDRANLDNKTDRERVSKGIYGGGGSFATSSITGAAAGGDMDASINTHSDSKSKGKGTIERSEDIRLQIAAIVTDTLPNGNLIIRGSQEVRVNNELRVLNVAGVVRPRDISGNNTISYDKIAEARISYGGRGRLSEIQQPPYGQQILDQFSPF.

The signal sequence occupies residues 1-16; sequence MNKAILAVAMVLLLAG. Residue cysteine 17 is the site of N-palmitoyl cysteine attachment. Cysteine 17 carries the S-diacylglycerol cysteine lipid modification.

This sequence belongs to the FlgH family. The basal body constitutes a major portion of the flagellar organelle and consists of four rings (L,P,S, and M) mounted on a central rod.

The protein localises to the cell outer membrane. It is found in the bacterial flagellum basal body. Functionally, assembles around the rod to form the L-ring and probably protects the motor/basal body from shearing forces during rotation. The polypeptide is Flagellar L-ring protein (Brucella canis (strain ATCC 23365 / NCTC 10854 / RM-666)).